The primary structure comprises 329 residues: Helicase VP6-A (329 aa).

2 disordered regions span residues 28–130 (NLVD…TNGG) and 189–232 (DLRR…SEEP). Composition is skewed to basic and acidic residues over residues 36 to 58 (EGGK…KDGE), 65 to 83 (GQKE…DRRI), and 96 to 109 (SGER…RGDG). K110 contacts ATP. A compositionally biased stretch (gly residues) spans 110-129 (KVGGGGGDADAGVGATGTNG). Basic and acidic residues-rich tracts occupy residues 189–207 (DLRR…ERGG) and 215–232 (HGDA…SEEP).

The protein belongs to the reoviruses VP6 family. Homohexamer.

It localises to the virion. The enzyme catalyses ATP + H2O = ADP + phosphate + H(+). ATP dependent RNA helicase essential for RNA packaging and viral transcription. Possesses ss- and dsRNA-binding capacity. In Bluetongue virus 10 (isolate USA) (BTV 10), this protein is Helicase VP6-A (Segment-9).